The chain runs to 479 residues: Siroheme synthase (479 aa).

The interval 1–202 (MNYLPIFLDL…GRDSEAEAQL (202 aa)) is precorrin-2 dehydrogenase /sirohydrochlorin ferrochelatase. NAD(+) contacts are provided by residues 22-23 (ET) and 43-44 (PA). Serine 128 is modified (phosphoserine). The interval 217-479 (GEVYLVGAGP…TPLEAPDHLA (263 aa)) is uroporphyrinogen-III C-methyltransferase. Proline 226 lines the S-adenosyl-L-methionine pocket. The active-site Proton acceptor is the aspartate 249. Lysine 271 (proton donor) is an active-site residue. S-adenosyl-L-methionine contacts are provided by residues 302 to 304 (GGD), isoleucine 307, 332 to 333 (TA), methionine 384, and glycine 413.

This sequence in the N-terminal section; belongs to the precorrin-2 dehydrogenase / sirohydrochlorin ferrochelatase family. It in the C-terminal section; belongs to the precorrin methyltransferase family.

It carries out the reaction uroporphyrinogen III + 2 S-adenosyl-L-methionine = precorrin-2 + 2 S-adenosyl-L-homocysteine + H(+). It catalyses the reaction precorrin-2 + NAD(+) = sirohydrochlorin + NADH + 2 H(+). The enzyme catalyses siroheme + 2 H(+) = sirohydrochlorin + Fe(2+). It functions in the pathway cofactor biosynthesis; adenosylcobalamin biosynthesis; precorrin-2 from uroporphyrinogen III: step 1/1. The protein operates within cofactor biosynthesis; adenosylcobalamin biosynthesis; sirohydrochlorin from precorrin-2: step 1/1. Its pathway is porphyrin-containing compound metabolism; siroheme biosynthesis; precorrin-2 from uroporphyrinogen III: step 1/1. It participates in porphyrin-containing compound metabolism; siroheme biosynthesis; siroheme from sirohydrochlorin: step 1/1. It functions in the pathway porphyrin-containing compound metabolism; siroheme biosynthesis; sirohydrochlorin from precorrin-2: step 1/1. Multifunctional enzyme that catalyzes the SAM-dependent methylations of uroporphyrinogen III at position C-2 and C-7 to form precorrin-2 via precorrin-1. Then it catalyzes the NAD-dependent ring dehydrogenation of precorrin-2 to yield sirohydrochlorin. Finally, it catalyzes the ferrochelation of sirohydrochlorin to yield siroheme. This Thiobacillus denitrificans (strain ATCC 25259 / T1) protein is Siroheme synthase.